Reading from the N-terminus, the 1327-residue chain is MPRQLLSGTVLLGAAFLLAGSTSGSKLKVPVLSVNGRQHVVQAGQTLNLTCRGEMLHSWSLPEALSKDSKRLNVTKYACGRNGTQFCSTLTLSRTQANDTGRYSCRYPTSPVKKKRESIVYVFINDTSNPFVEMHSDIPKIIHMTVGKEMIIPCRVTAPNIAVTLKKIPRETLIPDGKTIIWDNMRGFRIPEATYRFIGLLSCETTIGGHKYSTKYLTHRETNTIFDIKLSTPRLVKLLKGDSLAINCTVKAAWNTRVQMTWTYPGEAMKRGSVTQRIDQKNREANVFYSILVIDKVRDIDKGQYACHVKSGPSNKLVNTTVIVYDKRFINLKRRRKTMLEAVAGRKSYRLPMKVKAFPSPEVTWLKDGLPAAEKCARYMVKNYSLIIKDVAEEDAGNYTIILSLRQWNLSKNLTVTLKVNVKPQIYENAVSSFPDPNLYLLSSKQVLTCTVYGIPPPKITWMWYPCRQNHSKTRRGFCSRTDGSFNLKTGSNIGNRIQSIIERTAIIEGKNKTASTLVVAEAKSSGIYSCVASNKVGKAERNVSFLVTDVPSGFHISLEKVPIEGENLVLSCSANKFMYKDISWILPRTVTNQTKARKALNKEYSITLTLTIRNVSLAHSGTYTCRARNIFTGKEVLQKKDVSIRAQEAPALLRQLMDQTVNTSNSAMLECQVHGIPEPQITWFKNHEEIQQESGIILGPGSRMLFIERVKEEDEGLYQCIATNLKGSVESTAYVTVQGTVERSNLELITLTCTCVAATLFWLLLTLFIRKLKRPYFSETKTNHYLSIIMDPDEVPLDEQCECLPYDASKWEIARERLKLGKSLGHGAFGKVVQASAFGIKKSPTCRIVAVKMLKEGATASEYKALMTELKILIHIGHHLNIVNLLGACTKNGGPLMVIVEYCKYGNLSNYLKSKRNFFSPTKDPSLQGELMKDKKGIEPVEGKKQRLASVTSSESFASSGFQEDKSLSDAEEDEEDAAELYKLPLTMEDLISYSFQVARGMEFLSSRKCIHRDLAARNILLSENNVVKICDFGLARDIYKNPDYVRKGDARLPLKWMAPESIFDKIYNTKSDVWSYGVLLWEIFSLGASPYPGVQIDEDFCSKLKEGTRMRAPEQATEEIYQIMLDCWRSNPNERPWFSELVKRLGDLLQASVQQEGKDYIPLDTIFTAESGFPPASDPLCNEKFPVPSPNCRSTERARYINTFKIKPPQRIKTFEELPIKEKLVFNDYQADSGMVLASEELKRFTWTGSKQKWTLFGMKGVSRSKESGLSGITKPRSFCSFSCDQLSESKRRYTYGNTVLEKMKACHSPPPDYSSVVHYSQPSI.

A signal peptide spans 1–24 (MPRQLLSGTVLLGAAFLLAGSTSG). Over 25 to 749 (SKLKVPVLSV…GTVERSNLEL (725 aa)) the chain is Extracellular. Ig-like C2-type domains follow at residues 30-121 (PVLS…SIVY), 120-222 (VYVF…HRET), 227-323 (DIKL…TTVI), 331-417 (NLKR…LTVT), 424-545 (PQIY…RNVS), 552-644 (PSGF…KDVS), and 651-737 (PALL…AYVT). N48, N73, N82, N98, and N125 each carry an N-linked (GlcNAc...) asparagine glycan. C51 and C105 form a disulfide bridge. C154 and C203 form a disulfide bridge. N247 carries N-linked (GlcNAc...) asparagine glycosylation. A disulfide bond links C248 and C307. N319, N383, N398, N409, N413, N470, N512, N543, N593, N615, and N663 each carry an N-linked (GlcNAc...) asparagine glycan. C450 and C531 are disulfide-bonded. C573 and C626 are disulfide-bonded. C672 and C721 are disulfide-bonded. The helical transmembrane segment at 750–770 (ITLTCTCVAATLFWLLLTLFI) threads the bilayer. Residues 771-1327 (RKLKRPYFSE…SVVHYSQPSI (557 aa)) lie on the Cytoplasmic side of the membrane. Residues 819-1151 (LKLGKSLGHG…ELVKRLGDLL (333 aa)) form the Protein kinase domain. Residues 825–833 (LGHGAFGKV) and K853 each bind ATP. The disordered stretch occupies residues 950-971 (ASVTSSESFASSGFQEDKSLSD). The segment covering 951 to 961 (SVTSSESFASS) has biased composition (low complexity). Residue D1015 is the Proton acceptor of the active site. Phosphotyrosine; by autocatalysis is present on residues Y1046, Y1162, Y1202, Y1231, Y1316, and Y1322.

Belongs to the protein kinase superfamily. Tyr protein kinase family. CSF-1/PDGF receptor subfamily. In terms of assembly, interacts with VEGFA, VEGFB and PGF. Monomer in the absence of bound VEGFA, VEGFB or PGF. Homodimer in the presence of bound VEGFA, VEGFB and PGF. In terms of processing, autophosphorylated on tyrosine residues upon ligand binding.

The protein localises to the cell membrane. The protein resides in the endosome. It localises to the secreted. It carries out the reaction L-tyrosyl-[protein] + ATP = O-phospho-L-tyrosyl-[protein] + ADP + H(+). Its activity is regulated as follows. Present in an inactive conformation in the absence of bound ligand. Binding of VEGFA, VEGFB or PGF leads to dimerization and activation by autophosphorylation on tyrosine residues. Its function is as follows. Tyrosine-protein kinase that acts as a cell-surface receptor for VEGFA, VEGFB and PGF, and plays an essential role in the regulation of angiogenesis, cell survival, cell migration, macrophage function, and chemotaxis. Acts as a positive regulator of postnatal retinal hyaloid vessel regression. Has very high affinity for VEGFA and relatively low protein kinase activity; may function as a negative regulator of VEGFA signaling by limiting the amount of free VEGFA and preventing its binding to KDR. Ligand binding leads to the activation of several signaling cascades. Activation of PLCG1 leads to the production of the cellular signaling molecules diacylglycerol and inositol 1,4,5-trisphosphate and the activation of protein kinase C. Mediates phosphorylation of PIK3R1, the regulatory subunit of phosphatidylinositol 3-kinase, leading to activation of phosphatidylinositol kinase and the downstream signaling pathway. Mediates activation of MAPK1/ERK2, MAPK3/ERK1 and the MAP kinase signaling pathway, as well as of the AKT1 signaling pathway. Phosphorylates PLCG1. Promotes phosphorylation of AKT1 and CBL. In Gallus gallus (Chicken), this protein is Vascular endothelial growth factor receptor 1 (FLT1).